The chain runs to 278 residues: Probable cytochrome c oxidase subunit 3 (278 aa).

The next 6 helical transmembrane spans lie at 21 to 41 (PWPI…ISSM), 46 to 66 (FNMY…YSWW), 89 to 109 (IGMV…FASF), 174 to 194 (CVTA…MQVY), 212 to 232 (FYLA…FLIV), and 256 to 276 (AWYW…VYIL).

It belongs to the cytochrome c oxidase subunit 3 family.

Its subcellular location is the cell membrane. The enzyme catalyses 4 Fe(II)-[cytochrome c] + O2 + 8 H(+)(in) = 4 Fe(III)-[cytochrome c] + 2 H2O + 4 H(+)(out). In Rickettsia prowazekii (strain Madrid E), this protein is Probable cytochrome c oxidase subunit 3 (ctaE).